A 645-amino-acid polypeptide reads, in one-letter code: Pro-neuregulin-1, membrane-bound isoform (645 aa).

Residues 1-19 (MSERKEGRGKGKGKKKDRG) constitute a propeptide that is removed on maturation. The tract at residues 1–52 (MSERKEGRGKGKGKKKDRGSRGKPAPAEGDPSPALPPRLKEMKSQESAAGSK) is disordered. At 20 to 247 (SRGKPAPAEG…MEAEELYQKR (228 aa)) the chain is on the extracellular side. The Ig-like C2-type domain occupies 37–128 (PRLKEMKSQE…GNDSASANIT (92 aa)). Cysteine 57 and cysteine 112 are joined by a disulfide. Polar residues predominate over residues 139–164 (MSASTERPYVSSESPIRISVSTEGAN). A disordered region spans residues 139–175 (MSASTERPYVSSESPIRISVSTEGANTSSSTSTSTTG). Over residues 165-175 (TSSSTSTSTTG) the composition is skewed to low complexity. Residues 178-222 (HLIKCAEKEKTFCVNGGECFMVKDLSNPSRYLCKCPNEFTGDRCQ) enclose the EGF-like domain. 3 cysteine pairs are disulfide-bonded: cysteine 182–cysteine 196, cysteine 190–cysteine 210, and cysteine 212–cysteine 221. The helical transmembrane segment at 248–268 (VLTITGICIALLVVGIMCVVA) threads the bilayer. At 269–645 (YCKTKKQRQK…VIANQDPIAV (377 aa)) the chain is on the cytoplasmic side. Residues 340–355 (SHYTSTAHHSTTVTQT) are compositionally biased toward low complexity. 4 disordered regions span residues 340-364 (SHYT…SNGH), 380-406 (SVEN…PREC), 433-463 (MTTP…PVSS), and 531-593 (ETTQ…DTPF). Gly residues predominate over residues 392 to 402 (GPRGRLHGLGG). Basic residues predominate over residues 547–557 (TNSRRAKRTKP). Residues 568–579 (DSNPSSVSSNSE) are compositionally biased toward low complexity.

The protein belongs to the neuregulin family. As to quaternary structure, the cytoplasmic domain interacts with the LIM domain region of LIMK1. Forms a ternary complex with ERBB3 and ITGAV:ITGB3 or ITGA6:ITGB4. Interacts with NRDC and BACE1. In terms of processing, proteolytic cleavage close to the plasma membrane on the external face leads to the release of the soluble growth factor form. Post-translationally, N- and O-glycosylated. Extensive glycosylation precedes the proteolytic cleavage.

The protein resides in the cell membrane. It is found in the secreted. Its function is as follows. Direct ligand for ERBB3 and ERBB4 tyrosine kinase receptors. Concomitantly recruits ERBB1 and ERBB2 coreceptors, resulting in ligand-stimulated tyrosine phosphorylation and activation of the ERBB receptors. Perform diverse functions such as inducing growth and differentiation of epithelial, glial, neuronal, and skeletal muscle cells; inducing expression of acetylcholine receptor in synaptic vesicles during the formation of the neuromuscular junction; stimulating lobuloalveolar budding and milk production in the mammary gland and inducing differentiation of mammary tumor cells; stimulating Schwann cell proliferation; implication in the development of the myocardium such as trabeculation of the developing heart. Binds to ERBB4 and ERBB3. Acts as a ligand for integrins and binds (via EGF domain) to integrins ITGAV:ITGB3 or ITGA6:ITGB4. Its binding to integrins and subsequent ternary complex formation with integrins and ERRB3 are essential for NRG1-ERBB signaling. Induces the phosphorylation and activation of MAPK3/ERK1, MAPK1/ERK2 and AKT1, and ligand-dependent ERBB4 endocytosis is essential for the NRG1-mediated activation of these kinases in neurons. In Mus musculus (Mouse), this protein is Pro-neuregulin-1, membrane-bound isoform.